Here is a 41-residue protein sequence, read N- to C-terminus: Large ribosomal subunit protein bL36B (41 aa).

It belongs to the bacterial ribosomal protein bL36 family.

This Neisseria meningitidis serogroup B (strain ATCC BAA-335 / MC58) protein is Large ribosomal subunit protein bL36B.